The sequence spans 294 residues: Protein farnesyltransferase/geranylgeranyltransferase type-1 subunit alpha (294 aa).

PFTA repeat units lie at residues 57–91 (YSLRALNLTGFLIMNNPAHYTVWAYRFQILNHTPS), 92–125 (YIDNELEWLDEIAEDFQKNYQVWHHRQKILSLTK), 126–160 (NYERELEFTKKMFEIDSKNYHVWSYRVWILQNFND), 161–194 (YSQELKLTNELLEKDIYNNSAWNHRFYVLFETSK), and 199–233 (SLEEELNYLKDKILFAPDNQSAWNYLCGVLDKSGP).

Belongs to the protein prenyltransferase subunit alpha family. Heterodimer of an alpha(cwp1) and a beta(cpp1 or cwg2) subunit. Mg(2+) serves as cofactor.

The enzyme catalyses L-cysteinyl-[protein] + (2E,6E)-farnesyl diphosphate = S-(2E,6E)-farnesyl-L-cysteinyl-[protein] + diphosphate. The catalysed reaction is geranylgeranyl diphosphate + L-cysteinyl-[protein] = S-geranylgeranyl-L-cysteinyl-[protein] + diphosphate. Catalyzes the transfer of a farnesyl or geranyl-geranyl moiety from farnesyl or geranyl-geranyl diphosphate to a cysteine at the fourth position from the C-terminus of several proteins having the C-terminal sequence Cys-aliphatic-aliphatic-X. The alpha(cwp1) subunit is thought to participate in a stable complex with the substrate. The beta(cpp1 or cwg2) subunits bind the peptide substrate. The chain is Protein farnesyltransferase/geranylgeranyltransferase type-1 subunit alpha (cwp1) from Schizosaccharomyces pombe (strain 972 / ATCC 24843) (Fission yeast).